Reading from the N-terminus, the 377-residue chain is Peptidyl-prolyl cis-trans isomerase D (377 aa).

Residues 11–178 form the PPIase cyclophilin-type domain; it reads YFDIQIGSQK…TDVTIVDCGE (168 aa). TPR repeat units follow at residues 220-253, 273-306, and 314-347; these read ASELKNFGNTAFKSGDVALGLDKYQKGLRYLNEF, FTLHSNSSLLANKLGQYKNAQNWATYALEVADAA, and AKAYYRRAVAYSGQKEEDEALKDLQEALKLAPGD.

It belongs to the cyclophilin-type PPIase family. PPIase D subfamily.

The protein resides in the cytoplasm. The enzyme catalyses [protein]-peptidylproline (omega=180) = [protein]-peptidylproline (omega=0). Its function is as follows. PPIases accelerate the folding of proteins. It catalyzes the cis-trans isomerization of proline imidic peptide bonds in oligopeptides. This Aspergillus fumigatus (strain ATCC MYA-4609 / CBS 101355 / FGSC A1100 / Af293) (Neosartorya fumigata) protein is Peptidyl-prolyl cis-trans isomerase D (cpr6).